The sequence spans 576 residues: Arginine--tRNA ligase (576 aa).

Residues 126–136 (ANPTGPMHIGH) carry the 'HIGH' region motif.

It belongs to the class-I aminoacyl-tRNA synthetase family. Monomer.

It localises to the cytoplasm. The catalysed reaction is tRNA(Arg) + L-arginine + ATP = L-arginyl-tRNA(Arg) + AMP + diphosphate. This chain is Arginine--tRNA ligase, found in Rickettsia felis (strain ATCC VR-1525 / URRWXCal2) (Rickettsia azadi).